The primary structure comprises 344 residues: L-threonine 3-dehydrogenase (344 aa).

Zn(2+) is bound at residue Cys42. Active-site charge relay system residues include Thr44 and His47. The Zn(2+) site is built by His67, Glu68, Cys97, Cys100, Cys103, and Cys111. NAD(+) is bound by residues Ile179, Asp199, Arg204, 266–268 (LGI), and 290–291 (IY).

It belongs to the zinc-containing alcohol dehydrogenase family. Homotetramer. The cofactor is Zn(2+).

Its subcellular location is the cytoplasm. It catalyses the reaction L-threonine + NAD(+) = (2S)-2-amino-3-oxobutanoate + NADH + H(+). It participates in amino-acid degradation; L-threonine degradation via oxydo-reductase pathway; glycine from L-threonine: step 1/2. Its function is as follows. Catalyzes the NAD(+)-dependent oxidation of L-threonine to 2-amino-3-ketobutyrate. The sequence is that of L-threonine 3-dehydrogenase from Chelativorans sp. (strain BNC1).